We begin with the raw amino-acid sequence, 481 residues long: Molybdate-anion transporter (481 aa).

Helical transmembrane passes span 1–21 (MFVT…ALEI), 47–67 (LFLK…PYLY), 80–100 (IAIL…VAGW), 131–151 (FMLI…TTTF), 180–200 (WNYG…EWLG), 201–221 (LGPV…AWFV), 276–296 (VMLL…FVFL), 306–326 (PPLG…STLF), 341–361 (LLCL…FSTV), 371–391 (LLAF…VSFL), 403–423 (AVLA…LLAL), and 443–463 (FAGC…LFTV).

The protein belongs to the major facilitator superfamily.

It is found in the cell membrane. Mediates high-affinity intracellular uptake of the rare oligo-element molybdenum. In Danio rerio (Zebrafish), this protein is Molybdate-anion transporter (mfsd5).